The sequence spans 59 residues: Bacteriocin curvacin-A (59 aa).

Positions M1–G18 are excised as a propeptide. C28 and C33 are disulfide-bonded.

Belongs to the bacteriocin class IIA/YGNGV family.

It localises to the secreted. Its function is as follows. Bactericidal activity; inhibits closely related Lactobacilli, Listeria monocytogenes and ivanovvi, Enterococcus faecalis, Carnobacterium sp and Brocothrix thermosphacta. This Latilactobacillus curvatus (Lactobacillus curvatus) protein is Bacteriocin curvacin-A (curA).